Reading from the N-terminus, the 496-residue chain is NAD(P)H-quinone oxidoreductase subunit 2, chloroplastic (496 aa).

The next 14 helical transmembrane spans lie at 14–34 (SFLP…LDLV), 42–62 (MLVK…IQQW), 79–99 (FTTC…PLSF), 109–129 (LTEF…LSSA), 133–153 (ITIF…TGYV), 167–187 (LIIG…LYGL), 210–230 (LASW…LSLV), 244–264 (PTPV…ALTI), 281–301 (ILQI…MVET), 305–325 (RILT…IVAG), 334–354 (LVYM…IILF), 377–397 (ASCL…TGFF), 400–420 (ILLF…TGIF), and 469–489 (IYLC…VIYF).

Belongs to the complex I subunit 2 family. As to quaternary structure, NDH is composed of at least 16 different subunits, 5 of which are encoded in the nucleus.

The protein resides in the plastid. Its subcellular location is the chloroplast thylakoid membrane. It carries out the reaction a plastoquinone + NADH + (n+1) H(+)(in) = a plastoquinol + NAD(+) + n H(+)(out). The catalysed reaction is a plastoquinone + NADPH + (n+1) H(+)(in) = a plastoquinol + NADP(+) + n H(+)(out). In terms of biological role, NDH shuttles electrons from NAD(P)H:plastoquinone, via FMN and iron-sulfur (Fe-S) centers, to quinones in the photosynthetic chain and possibly in a chloroplast respiratory chain. The immediate electron acceptor for the enzyme in this species is believed to be plastoquinone. Couples the redox reaction to proton translocation, and thus conserves the redox energy in a proton gradient. The chain is NAD(P)H-quinone oxidoreductase subunit 2, chloroplastic from Chara vulgaris (Common stonewort).